The following is a 567-amino-acid chain: Glucose-6-phosphate isomerase, cytosolic B (567 aa).

D-glucose 6-phosphate contacts are provided by residues 156-157 (GS), 212-217 (SKTFTT), Gln356, Glu360, His391, and Lys516. The active-site Proton donor is Glu360. Residues His391 and Lys516 contribute to the active site.

It belongs to the GPI family. As to quaternary structure, homodimer.

The protein localises to the cytoplasm. The catalysed reaction is alpha-D-glucose 6-phosphate = beta-D-fructose 6-phosphate. Its pathway is carbohydrate degradation; glycolysis; D-glyceraldehyde 3-phosphate and glycerone phosphate from D-glucose: step 2/4. Its function is as follows. Catalyzes the conversion of glucose-6-phosphate to fructose-6-phosphate, the second step in glycolysis, and the reverse reaction during gluconeogenesis. The protein is Glucose-6-phosphate isomerase, cytosolic B of Oryza sativa subsp. japonica (Rice).